The sequence spans 119 residues: Large ribosomal subunit protein bL12 (119 aa).

This sequence belongs to the bacterial ribosomal protein bL12 family. As to quaternary structure, homodimer. Part of the ribosomal stalk of the 50S ribosomal subunit. Forms a multimeric L10(L12)X complex, where L10 forms an elongated spine to which 2 to 4 L12 dimers bind in a sequential fashion. Binds GTP-bound translation factors.

Functionally, forms part of the ribosomal stalk which helps the ribosome interact with GTP-bound translation factors. Is thus essential for accurate translation. In Lysinibacillus sphaericus (strain C3-41), this protein is Large ribosomal subunit protein bL12.